The primary structure comprises 148 residues: uncharacterized protein (148 aa).

The disordered stretch occupies residues 55 to 148 (KMRCGESGAG…RNQGQLYPQP (94 aa)). The segment covering 68-104 (RSNSAEVSSSQPALASKSQSKWGPTSNNPRGALTTTE) has biased composition (polar residues).

This is an uncharacterized protein from Homo sapiens (Human).